A 710-amino-acid chain; its full sequence is MKLDRKKKRLLLKTIFSIVILILPLTFLHPTNSTVSSQNQVPIQIIYNYNVSGGVIYTAPLNIPSGFYNYYMINQYGTLLYSYLFSTNPAFVVWYEPQPTTETYYFVYGQSVTSQLVSTDVFSLYTQFYIYNSSMWNISNGVVSGGVLTLNGKNSILTENYTAPRYTSALWLYQILSPQSVSPTQIVYTSPIPPGSLIIVHVLTYTGSYQVPYPAIAQYNTPYIIAESYTSQYLTANSTHYYYYYNSLKYVGSMQQSLPFITTVSTNGLIFYSSAKNSQVLLPGATLPATSYTTNSTFIAGQLVGTGIDSYSINPSFVWCPEWIVNGSIQLLNGCKVPITGHYQLDKSTYAVILNSVFNSSDDELIAPVNSIVTVTYSNGTSYSFTVTGSSIYSGLPVPLVVVKFYGVGVTGIHISTNAFGINQQYSALIGFTDLLHTYGVLIQNGEAYSYIAGTKGPALGNVTFPMVVAVGEFAVGNTYYVFGEIVTTSRVFPFIQQSSYAIQPTIAYVNYNGTIPLVIQSVAETLSTGTYYELSGIAAMNVGQPTPINSVILSVVSQPGLEIVGSNGNVYSTIVQNTSAPNLVLVGFQGYSITLVYTNVQQNLVVTTNNFPVNLPSDMPLLVAIDQASRSITITVGQTQTQSIFMKTIPVNTTTPAVSLPIPNYPGNIIVDPESELTVISYYIIGAVAIVSMAYGTKIWIGVFIFAIS.

The signal sequence occupies residues 1–33 (MKLDRKKKRLLLKTIFSIVILILPLTFLHPTNS). A run of 3 helical transmembrane segments spans residues 41-61 (VPIQ…TAPL), 76-95 (YGTL…VVWY), and 689-709 (VAIV…IFAI).

It is found in the host membrane. This is Putative transmembrane protein ORF710 from Acidianus convivator (ATV).